The chain runs to 1071 residues: Nonribosomal peptide synthetase flvI (1071 aa).

Residues Arg33–Asp417 form an adenylation region. The Carrier domain occupies Met552 to Val628. An O-(pantetheine 4'-phosphoryl)serine modification is found at Ser589. A condensation region spans residues Asn689 to Ser961.

This sequence belongs to the NRP synthetase family.

The catalysed reaction is (2S)-5,5-dimethylpiperidine-2-carboxylate + 10-hydroxy-pre-flavunoidine + ATP = flavunoidine + AMP + diphosphate + H(+). Its pathway is secondary metabolite biosynthesis; terpenoid biosynthesis. In terms of biological role, nonribosomal peptide synthetase; part of the gene cluster that mediates the biosynthesis of flavunoidine, an alkaloidal terpenoid with a tetracyclic cage-like core connected to dimethylcadaverine via a C-N bond and acylated with 5,5-dimethyl-L-pipecolate. The tetracyclic core is synthesized by the terpene cyclase flvE and the cytochrome P450 monooxygenase flvD. The terpene cyclase flvE catalyzes the cyclization of farnesyl pyrophosphate (FPP) to form (1R,4R,5S)-(+)-acoradiene and the cytochrome P450 monooxygenase flvD is then responsible for oxidative conversion of (1R,4R,5S)-(+)-acoradiene into the tetracyclic cage present in the final product flavunoidine. In parallel, the N-methyltransferase flvH dimethylates L-lysine to give N,N-dimethyl-L-Lysin which is decarboxylated by flvG to afford dimethylcadaverine. The terpene cyclase-like protein flvF is the enzyme that attaches the dimethylcadaverine precusor at the C-7 of the tetracyclic cage to yield pre-flavunoidine. The cytochrome monooxygenase flvC hydroxylates the C-10 position of pre-flavunoidine whereas the NRPS flvI acylates the terpenoid core at the hydroxylated C-10 with dimethylpipecolate to yield final flavunoidine. The bifunctional enzyme flvA and the dehydrogenase flvB are responsible for the synthesis of the dimethylpipecolate precursor. The PLP-dependent lyase domain of flvA might use L-O-acetyl-homoserine and alpha-keto-isovalerate to form an intermediary ketone that can cyclize intramolecularly to yield an imine. The imine can be reduced by flvB to yield the 6-carboxylated pipecolate. The C-terminal alpha-KG-dependent oxygenase domain of flvA is then proposed to catalyze the decarboxylation to yield dimethylpipecolate. The protein is Nonribosomal peptide synthetase flvI of Aspergillus flavus (strain ATCC 200026 / FGSC A1120 / IAM 13836 / NRRL 3357 / JCM 12722 / SRRC 167).